Here is a 339-residue protein sequence, read N- to C-terminus: Heat-inducible transcription repressor HrcA (339 aa).

This sequence belongs to the HrcA family.

Its function is as follows. Negative regulator of class I heat shock genes (grpE-dnaK-dnaJ and groELS operons). Prevents heat-shock induction of these operons. The sequence is that of Heat-inducible transcription repressor HrcA from Acidothermus cellulolyticus (strain ATCC 43068 / DSM 8971 / 11B).